Consider the following 134-residue polypeptide: Translation initiation factor 2 subunit beta (134 aa).

Belongs to the eIF-2-beta/eIF-5 family. As to quaternary structure, heterotrimer composed of an alpha, a beta and a gamma chain.

Its function is as follows. eIF-2 functions in the early steps of protein synthesis by forming a ternary complex with GTP and initiator tRNA. This is Translation initiation factor 2 subunit beta from Pyrobaculum calidifontis (strain DSM 21063 / JCM 11548 / VA1).